Consider the following 425-residue polypeptide: MNSITLGPLSKANGEIQIPGSKSLSNRILLLATLAKGTTKITNLLDSDDIRRMLESLTKLGVSYSLEDNGTTCVLEGLGGPIQADFGDLFLGNAGTAMRPLTAALCLGKGEFLLHGEPRMHERPIGDLVDALQALGVDITYEGEKNYPPLRIKANGLSGGEVSIKGNISSQFLTAILMSAPLAKSDLTIKVDGELVSKPYIDITLHAMKQFGVEVENQNYQAFVVKGQQTYQSPGEIMVEGDASSASYFLAAAAIAGGKIKVHGVGTDSVQGDVKFADVLAQMGAKITYGPSWIEAERNELNGIDMDMNHIPDAAMTIATTALFAKGPTTIRNIYNWRVKETDRLYAMATELKKLGADVIEGKDFITVTPVANLKHAAIDTYNDHRIAMCFSLVAFSDTPVTINDPGCTSKTFPTYFELFNTIAN.

3-phosphoshikimate is bound by residues Lys22, Ser23, and Arg27. Phosphoenolpyruvate is bound at residue Lys22. Positions 95 and 123 each coordinate phosphoenolpyruvate. Ser169, Ser170, Gln171, Ser197, Asp313, Asn336, and Lys340 together coordinate 3-phosphoshikimate. Gln171 contacts phosphoenolpyruvate. The active-site Proton acceptor is the Asp313. Phosphoenolpyruvate-binding residues include Arg344, Arg386, and Lys411.

The protein belongs to the EPSP synthase family. As to quaternary structure, monomer.

Its subcellular location is the cytoplasm. The catalysed reaction is 3-phosphoshikimate + phosphoenolpyruvate = 5-O-(1-carboxyvinyl)-3-phosphoshikimate + phosphate. It participates in metabolic intermediate biosynthesis; chorismate biosynthesis; chorismate from D-erythrose 4-phosphate and phosphoenolpyruvate: step 6/7. Functionally, catalyzes the transfer of the enolpyruvyl moiety of phosphoenolpyruvate (PEP) to the 5-hydroxyl of shikimate-3-phosphate (S3P) to produce enolpyruvyl shikimate-3-phosphate and inorganic phosphate. The chain is 3-phosphoshikimate 1-carboxyvinyltransferase from Marinomonas sp. (strain MWYL1).